Consider the following 132-residue polypeptide: Movement protein TGB3 (132 aa).

At 1–11 (MVLVVKVDLSN) the chain is on the cytoplasmic side. The helical transmembrane segment at 12-32 (IVLYIVAGCVVVSMLYSPFFS) threads the bilayer. At 33 to 109 (NDVKASSYAG…TETLFIILSR (77 aa)) the chain is on the lumenal side. The chain crosses the membrane as a helical span at residues 110–130 (LFGLAVFLFMICLMSIVWFWC). Topologically, residues 131 to 132 (HR) are cytoplasmic.

Belongs to the benyvirus TGB3 movement protein family. Interacts with movement proteins TGB1 and TGB2.

Its subcellular location is the host cell junction. The protein localises to the host plasmodesma. It is found in the host endoplasmic reticulum membrane. Participates in the transport of viral RNA to the plasmodesmata. TGBp3 most probably contains signals of plasmodesmata targeting is therefore involved in the targeting of TGBp2, and viral RNAs-TGBp1 (RNP complex), to plasmodesmata. Can gate plasmodesmata and increase their size exclusion limit. This Beta macrocarpa (Beet) protein is Movement protein TGB3.